The primary structure comprises 315 residues: Ribosomal RNA small subunit methyltransferase H (315 aa).

Residues 33–35 (GGH), Asp52, Phe84, Asp106, and Gln113 contribute to the S-adenosyl-L-methionine site.

It belongs to the methyltransferase superfamily. RsmH family.

The protein resides in the cytoplasm. It catalyses the reaction cytidine(1402) in 16S rRNA + S-adenosyl-L-methionine = N(4)-methylcytidine(1402) in 16S rRNA + S-adenosyl-L-homocysteine + H(+). In terms of biological role, specifically methylates the N4 position of cytidine in position 1402 (C1402) of 16S rRNA. This is Ribosomal RNA small subunit methyltransferase H from Lactobacillus acidophilus (strain ATCC 700396 / NCK56 / N2 / NCFM).